The primary structure comprises 180 residues: Cytokinin-beta-glucosidase 4 (180 aa).

Functionally, hydrolyzes cytokinin glucosides thus liberating free cytokinins. The protein is Cytokinin-beta-glucosidase 4 (ROLC4) of Panax ginseng (Korean ginseng).